A 185-amino-acid chain; its full sequence is MTRNILLTVTLICIVFITVGGQSPATAPIHSPSTSPHKPKPTSPAISPAAPTPESTEAPAKTPVEAPVEAPPSPTPASTPQISPPAPSPEADTPSAPEIAPSADVPAPALTKHKKKTKKHKTAPAPGPASELLSPPAPPGEAPGPGPSDAFSPAADDQSGAQRISVVIQMVGAAAIAWSLLVLAF.

The signal sequence occupies residues 1-21 (MTRNILLTVTLICIVFITVGG). A disordered region spans residues 25–160 (ATAPIHSPST…FSPAADDQSG (136 aa)). The span at 43–68 (SPAISPAAPTPESTEAPAKTPVEAPV) shows a compositional bias: low complexity. Residues 69–88 (EAPPSPTPASTPQISPPAPS) are compositionally biased toward pro residues. Over residues 111-122 (TKHKKKTKKHKT) the composition is skewed to basic residues. The segment covering 135 to 146 (PPAPPGEAPGPG) has biased composition (pro residues). A lipid anchor (GPI-anchor amidated serine) is attached at Ser159. A propeptide spans 160 to 185 (GAQRISVVIQMVGAAAIAWSLLVLAF) (removed in mature form).

The protein belongs to the lysine-rich AGP family. In terms of processing, O-glycosylated on the hydroxyproline residues. Predominantly expressed in open flowers. Also expressed in leaves and stems, and at a lower level in roots.

The protein resides in the cell membrane. Its function is as follows. Proteoglycan that seems to be implicated in diverse developmental roles such as differentiation, cell-cell recognition, embryogenesis and programmed cell death. This is Lysine-rich arabinogalactan protein 17 (AGP17) from Arabidopsis thaliana (Mouse-ear cress).